A 353-amino-acid chain; its full sequence is Inositol-tetrakisphosphate 1-kinase 3 (353 aa).

Residues 1-25 (MKLTDNEEITMNGTREMETTEQETS) form a disordered region. The 1D-myo-inositol 1,3,4-trisphosphate site is built by K50 and K92. R127 and K177 together coordinate ATP. In terms of domain architecture, ATP-grasp spans 138 to 350 (NLSDSNGRVG…QSQCKKRALA (213 aa)). 1D-myo-inositol 1,3,4-trisphosphate-binding residues include H188 and K220. ATP is bound by residues 209–220 (QEFVNHGGVLFK) and S235. Mg(2+)-binding residues include D300, D315, and N317. 1D-myo-inositol 1,3,4-trisphosphate is bound at residue N317.

The protein belongs to the ITPK1 family. In terms of assembly, monomer. Mg(2+) serves as cofactor. As to expression, highly expressed in leaves and flowers, and at lower levels in roots, stems, cauline leaves and siliques.

The enzyme catalyses 1D-myo-inositol 3,4,5,6-tetrakisphosphate + ATP = 1D-myo-inositol 1,3,4,5,6-pentakisphosphate + ADP + H(+). It carries out the reaction 1D-myo-inositol 1,3,4-trisphosphate + ATP = 1D-myo-inositol 1,3,4,5-tetrakisphosphate + ADP + H(+). It catalyses the reaction 1D-myo-inositol 1,3,4-trisphosphate + ATP = 1D-myo-inositol 1,3,4,6-tetrakisphosphate + ADP + H(+). Its function is as follows. Kinase that can phosphorylate various inositol polyphosphate such as Ins(3,4,5,6)P4 or Ins(1,3,4)P3. Phosphorylates Ins(3,4,5,6)P4 to form InsP5. This reaction is thought to have regulatory importance, since Ins(3,4,5,6)P4 is an inhibitor of plasma membrane Ca(2+)-activated Cl(-) channels, while Ins(1,3,4,5,6)P5 is not. Also phosphorylates Ins(1,3,4)P3 or a racemic mixture of Ins(1,4,6)P3 and Ins(3,4,6)P3 to form InsP4. Ins(1,3,4,6)P4 is an essential molecule in the hexakisphosphate (InsP6) pathway. This Arabidopsis thaliana (Mouse-ear cress) protein is Inositol-tetrakisphosphate 1-kinase 3 (ITPK3).